The primary structure comprises 425 residues: MRFWDIRRVENVSLNLQLENGKLEKPRYNKSTSKGFRVLKNGFWGIFEGNVADDEGLRQAEKNAFTQGDGDIEEIATKGRYRMRVKRDPQDMSIEEKVELLKDLEKIIRDVCVSTKLVYFENRRVLQYRDSCGSEVEYEVLRTGVSIMGVGKGRSLQFLSKRQMRVGGYEVLDGVDEKAYEIVEVLPKLVNALAPPSGEMSVVMDSSLAGVFVHEAFGHAVEADHVLQGATVLKGRLNEKVADESVTIIDDPTLPEFGFFPFDDEGVRAEKKVIVEDGVLKSFLHSRETAKKLGGVAGNARSQGVDVPIVRMSNTYIDTHHYSFDELLEECRDGVYLVGSRGGETNPATGYFHFNAQYGYLIKNGELAEMVRDVSLSGNTLEILRNVKIGREIEFDPGFCGKAGQLVPVSDGSPPVLCRATVGGA.

This sequence belongs to the peptidase U62 family.

Its function is as follows. Probable metalloprotease. This Archaeoglobus fulgidus (strain ATCC 49558 / DSM 4304 / JCM 9628 / NBRC 100126 / VC-16) protein is Metalloprotease AF_0655.